Reading from the N-terminus, the 75-residue chain is Acyl carrier protein (75 aa).

The Carrier domain occupies 1–74 (MLDKVKEIIV…DVINYIEANK (74 aa)). Residue Ser34 is modified to O-(pantetheine 4'-phosphoryl)serine.

It belongs to the acyl carrier protein (ACP) family. In terms of processing, 4'-phosphopantetheine is transferred from CoA to a specific serine of apo-ACP by AcpS. This modification is essential for activity because fatty acids are bound in thioester linkage to the sulfhydryl of the prosthetic group.

It localises to the cytoplasm. It functions in the pathway lipid metabolism; fatty acid biosynthesis. Its function is as follows. Carrier of the growing fatty acid chain in fatty acid biosynthesis. The sequence is that of Acyl carrier protein from Fusobacterium nucleatum subsp. nucleatum (strain ATCC 25586 / DSM 15643 / BCRC 10681 / CIP 101130 / JCM 8532 / KCTC 2640 / LMG 13131 / VPI 4355).